Reading from the N-terminus, the 141-residue chain is VLSSTDKSNVKAAWDKVGGNVGEYGAEALERMFLSFPTTKTYFPHFDLAHGSSQVKAHGKKVGDALTNAVGHIDDLPGALSALSDLHAYKLRVDPVNFKLLSHCLLVTLASHLPSDFTPAVHASLDKFLASVSTVLTSKYR.

The Globin domain maps to 1–141 (VLSSTDKSNV…VSTVLTSKYR (141 aa)). A Phosphoserine modification is found at Ser3. 2 positions are modified to N6-succinyllysine: Lys7 and Lys11. The residue at position 16 (Lys16) is an N6-acetyllysine; alternate. The residue at position 16 (Lys16) is an N6-succinyllysine; alternate. At Tyr24 the chain carries Phosphotyrosine. Ser35 is modified (phosphoserine). Lys40 bears the N6-succinyllysine mark. Residue His58 coordinates O2. His87 contributes to the heme b binding site. Ser102 bears the Phosphoserine mark. Thr108 bears the Phosphothreonine mark. Residues Ser124 and Ser131 each carry the phosphoserine modification. A phosphothreonine mark is found at Thr134 and Thr137. The residue at position 138 (Ser138) is a Phosphoserine.

It belongs to the globin family. Heterotetramer of two alpha chains and two beta chains. In terms of tissue distribution, red blood cells.

Functionally, involved in oxygen transport from the lung to the various peripheral tissues. In terms of biological role, hemopressin acts as an antagonist peptide of the cannabinoid receptor CNR1. Hemopressin-binding efficiently blocks cannabinoid receptor CNR1 and subsequent signaling. This is Hemoglobin subunit alpha from Pteropus vampyrus (Large flying fox).